The primary structure comprises 285 residues: Chlorite dismutase (285 aa).

An N-terminal signal peptide occupies residues 1 to 38 (MKVRCVSLVAAGLLTIAGSAIGQPAPAPMPAMAPAAKP). Glu105 lines the Ca(2+) pocket. Residue His205 coordinates heme. Arg218 acts as the Proton acceptor in catalysis. Ca(2+)-binding residues include Asp227 and Thr266.

This sequence belongs to the chlorite dismutase family. As to quaternary structure, homopentamer. Requires heme b as cofactor.

It localises to the periplasm. The catalysed reaction is chloride + O2 = chlorite. Catalyzes the heme-dependent decomposition of chlorite to O(2) and chloride with high efficiency and specificity. Used to detoxify chlorite, a by-product of the reduction of perchlorate, a primarily anthropogenic pollutant, in perchlorate-respiring bacteria. The polypeptide is Chlorite dismutase (cld) (Ideonella dechloratans).